The sequence spans 255 residues: MTALYWQTIGEGERDLVLLHGWGLNAEVWSCIQALTPHFRLHLVDLPGYGRSQGFGALSLAQMTEIVLAAAPPQAWWLGWSLGGLVASQAALMQPQRVSGLITVASSPCFAARDEWPGIRPDVLSGFQHQLSLDFQRTVERFLALQTLGTESARQDARQLKAVVLNQPTPSVEVLNGGLEILRTADLRAPLAELNLPLLRIYGYLDGLVPRKVAELLDAAWPNSTSQIVAKAAHAPFISHPDEFVTMIEAFIAAH.

The region spanning 16 to 241 (LVLLHGWGLN…AAHAPFISHP (226 aa)) is the AB hydrolase-1 domain. Substrate-binding positions include W22, 81–82 (SL), and 142–146 (FLALQ). The active-site Nucleophile is S81. Residues D206 and H234 contribute to the active site. H234 is a binding site for substrate.

The protein belongs to the AB hydrolase superfamily. Carboxylesterase BioH family. Monomer.

It is found in the cytoplasm. It carries out the reaction 6-carboxyhexanoyl-[ACP] methyl ester + H2O = 6-carboxyhexanoyl-[ACP] + methanol + H(+). Its pathway is cofactor biosynthesis; biotin biosynthesis. Functionally, the physiological role of BioH is to remove the methyl group introduced by BioC when the pimeloyl moiety is complete. It allows to synthesize pimeloyl-ACP via the fatty acid synthetic pathway through the hydrolysis of the ester bonds of pimeloyl-ACP esters. Also displays a weak thioesterase activity. Can form a complex with CoA, and may be involved in the condensation of CoA and pimelic acid into pimeloyl-CoA, a precursor in biotin biosynthesis. This chain is Pimeloyl-[acyl-carrier protein] methyl ester esterase, found in Serratia marcescens.